The sequence spans 100 residues: Urease subunit gamma (100 aa).

The protein belongs to the urease gamma subunit family. Heterotrimer of UreA (gamma), UreB (beta) and UreC (alpha) subunits. Three heterotrimers associate to form the active enzyme.

It is found in the cytoplasm. It carries out the reaction urea + 2 H2O + H(+) = hydrogencarbonate + 2 NH4(+). Its pathway is nitrogen metabolism; urea degradation; CO(2) and NH(3) from urea (urease route): step 1/1. In Alkalilimnicola ehrlichii (strain ATCC BAA-1101 / DSM 17681 / MLHE-1), this protein is Urease subunit gamma.